The chain runs to 1202 residues: DNA-directed RNA polymerase subunit beta (1202 aa).

Positions 1151–1162 (LRDMDEEDDDVV) are enriched in acidic residues. A disordered region spans residues 1151-1202 (LRDMDEEDDDVVNVDALSKYAEKQNEKTNASAEEAKAPSTESAPVETKNNQN). Residues 1189–1202 (STESAPVETKNNQN) are compositionally biased toward polar residues.

This sequence belongs to the RNA polymerase beta chain family. In terms of assembly, the RNAP catalytic core consists of 2 alpha, 1 beta, 1 beta' and 1 omega subunit. When a sigma factor is associated with the core the holoenzyme is formed, which can initiate transcription.

It catalyses the reaction RNA(n) + a ribonucleoside 5'-triphosphate = RNA(n+1) + diphosphate. DNA-dependent RNA polymerase catalyzes the transcription of DNA into RNA using the four ribonucleoside triphosphates as substrates. In Pediococcus pentosaceus (strain ATCC 25745 / CCUG 21536 / LMG 10740 / 183-1w), this protein is DNA-directed RNA polymerase subunit beta.